The chain runs to 311 residues: p-hydroxybenzoic acid efflux pump subunit AaeA (311 aa).

Residues V11 to F31 form a helical membrane-spanning segment.

The protein belongs to the membrane fusion protein (MFP) (TC 8.A.1) family.

It localises to the cell inner membrane. Its function is as follows. Forms an efflux pump with AaeB. This is p-hydroxybenzoic acid efflux pump subunit AaeA from Yersinia pseudotuberculosis serotype O:1b (strain IP 31758).